The primary structure comprises 405 residues: Phosphoglycerate kinase (405 aa).

Substrate is bound by residues 24–26, R40, 63–66, R122, and R162; these read DFN and HLGR. Residues K212, E331, and 361-364 contribute to the ATP site; that span reads GGDS.

Belongs to the phosphoglycerate kinase family. Monomer.

The protein localises to the cytoplasm. The catalysed reaction is (2R)-3-phosphoglycerate + ATP = (2R)-3-phospho-glyceroyl phosphate + ADP. It functions in the pathway carbohydrate degradation; glycolysis; pyruvate from D-glyceraldehyde 3-phosphate: step 2/5. This Corynebacterium glutamicum (strain R) protein is Phosphoglycerate kinase.